Consider the following 568-residue polypeptide: Zinc finger protein 76 (568 aa).

A Glycyl lysine isopeptide (Lys-Gly) (interchain with G-Cter in SUMO2) cross-link involves residue Lys24. 3 repeat units span residues 34 to 45 (IQLEDGTTAYIH), 62 to 73 (VQLEDGSMAYIH), and 88 to 99 (VQLEDGSTAYIH). The interval 34–99 (IQLEDGTTAY…LEDGSTAYIH (66 aa)) is 3 X 12 AA approximate repeats. C2H2-type zinc fingers lie at residues 165 to 189 (FRCG…ERAH), 195 to 219 (YRCD…VRTH), 225 to 249 (YKCP…VRTH), 255 to 279 (FRCP…VRTH), 285 to 309 (YTCP…VRIH), 315 to 339 (YVCT…HVVH), and 345 to 368 (YTCS…RSAH). A disordered region spans residues 365 to 401 (RSAHGELEATEESEQALYEQQQLEAASAAEESPSPKP). Low complexity predominate over residues 379-396 (QALYEQQQLEAASAAEES).

Belongs to the krueppel C2H2-type zinc-finger protein family.

It localises to the nucleus. Its function is as follows. May be involved in transcriptional regulation. This is Zinc finger protein 76 (Znf76) from Rattus norvegicus (Rat).